Here is a 298-residue protein sequence, read N- to C-terminus: MKKWLIALAGVLLTFTLAGCGSKTVASTSGGKITESQYYSSMKGTSSGKQVLQQMILNKVLEKDYGSKVSTKQVTKQYNTYKSQYGSSFSTVLSQNGLTTKTFKEQLRSNLLLKEAVKDKVKITDKALKKQWKSYEPKVTVQHILVAKSATADKVLDALKKDSSQANFTKLAKKYSTDTTTKNDGGKLSAFDNTNTSYSSKFLTAAFKLKNGEYTTSAVKTSNGYEIIRMIKNPGKGKMSDHTADLKKQIWDNDMSDSTVLQNVVSKVLKGGNVSIKDNDLKDILSSYLSTSSSSSSN.

The signal sequence occupies residues 1–19; that stretch reads MKKWLIALAGVLLTFTLAG. Cysteine 20 carries N-palmitoyl cysteine lipidation. Cysteine 20 carries S-diacylglycerol cysteine lipidation. A PpiC domain is found at 136–232; the sequence is EPKVTVQHIL…NGYEIIRMIK (97 aa).

It belongs to the PrsA family.

The protein resides in the cell membrane. It carries out the reaction [protein]-peptidylproline (omega=180) = [protein]-peptidylproline (omega=0). Its function is as follows. Plays a major role in protein secretion by helping the post-translocational extracellular folding of several secreted proteins. This Lactiplantibacillus plantarum (strain ATCC BAA-793 / NCIMB 8826 / WCFS1) (Lactobacillus plantarum) protein is Foldase protein PrsA 1 (prsA1).